Consider the following 475-residue polypeptide: UDP-N-acetylmuramate--L-alanine ligase (475 aa).

Residue 112 to 118 (GTHGKTT) coordinates ATP.

It belongs to the MurCDEF family.

It localises to the cytoplasm. It carries out the reaction UDP-N-acetyl-alpha-D-muramate + L-alanine + ATP = UDP-N-acetyl-alpha-D-muramoyl-L-alanine + ADP + phosphate + H(+). The protein operates within cell wall biogenesis; peptidoglycan biosynthesis. Functionally, cell wall formation. In Paracidovorax citrulli (strain AAC00-1) (Acidovorax citrulli), this protein is UDP-N-acetylmuramate--L-alanine ligase.